The primary structure comprises 351 residues: MNVKEHVISLPRRVFVGHDIVYDISIYFSQLGVTPPFLIVTGTKYTKKIADKVIENLPKDAKYEVVEIDSATLDDVYMVEEVIKRISPSLLLGIGGGKVIDVTKYAAFRNSLEFVSIPTSPSHDGITSPFASIKGLQKPVSVKAKEPLAIIADIEILSLSPRRLINAGIGDTIGKIIAVRDWKLAAKLRGEYYGDYTASLALMSAKHAFQCTKIINKDIKYGVRMLMEALISSGVAMGMAGSTRPASGSEHLFAHAVELIHPEGILHGELVGLGTIIMAYLHGINWKIIRNRLKKIGFPVKAKDLGLSDEEVIKALTIAHTIRPERYTILGDRGLTWSSAEKIARVTKIID.

NAD(+)-binding positions include glycine 97–aspartate 101 and threonine 119–serine 122. A substrate-binding site is contributed by aspartate 124. Serine 128 provides a ligand contact to NAD(+). Residue aspartate 171 participates in substrate binding. Zn(2+) is bound by residues aspartate 171 and histidine 251. Histidine 255 is a binding site for substrate. Histidine 267 lines the Zn(2+) pocket.

The protein belongs to the glycerol-1-phosphate dehydrogenase family. In terms of assembly, homodimer. Zn(2+) is required as a cofactor.

The protein resides in the cytoplasm. It carries out the reaction sn-glycerol 1-phosphate + NAD(+) = dihydroxyacetone phosphate + NADH + H(+). It catalyses the reaction sn-glycerol 1-phosphate + NADP(+) = dihydroxyacetone phosphate + NADPH + H(+). Its pathway is membrane lipid metabolism; glycerophospholipid metabolism. Its function is as follows. Catalyzes the NAD(P)H-dependent reduction of dihydroxyacetonephosphate (DHAP or glycerone phosphate) to glycerol 1-phosphate (G1P). The G1P thus generated is used as the glycerophosphate backbone of phospholipids in the cellular membranes of Archaea. The chain is Glycerol-1-phosphate dehydrogenase [NAD(P)+] from Saccharolobus solfataricus (strain ATCC 35092 / DSM 1617 / JCM 11322 / P2) (Sulfolobus solfataricus).